The chain runs to 352 residues: tRNA N6-adenosine threonylcarbamoyltransferase (352 aa).

Residues histidine 115 and histidine 119 each coordinate Fe cation. Residues 138-142 (LVSGG), aspartate 171, glycine 184, and asparagine 277 each bind substrate. Fe cation is bound at residue aspartate 305.

The protein belongs to the KAE1 / TsaD family. Requires Fe(2+) as cofactor.

It localises to the cytoplasm. It carries out the reaction L-threonylcarbamoyladenylate + adenosine(37) in tRNA = N(6)-L-threonylcarbamoyladenosine(37) in tRNA + AMP + H(+). Its function is as follows. Required for the formation of a threonylcarbamoyl group on adenosine at position 37 (t(6)A37) in tRNAs that read codons beginning with adenine. Is involved in the transfer of the threonylcarbamoyl moiety of threonylcarbamoyl-AMP (TC-AMP) to the N6 group of A37, together with TsaE and TsaB. TsaD likely plays a direct catalytic role in this reaction. This Variovorax paradoxus (strain S110) protein is tRNA N6-adenosine threonylcarbamoyltransferase.